A 70-amino-acid polypeptide reads, in one-letter code: MRIVLVGPPGAGKGTQAAFLARNLSIPHISTGDLFRANISKQTELGKLAKSYMDKGELVPDEVTIAMAKD.

10-15 provides a ligand contact to ATP; that stretch reads GAGKGT. The NMP stretch occupies residues 30-59; it reads STGDLFRANISKQTELGKLAKSYMDKGELV. AMP contacts are provided by residues Thr31, Arg36, and 57 to 59; that span reads ELV.

The protein belongs to the adenylate kinase family. In terms of assembly, monomer.

It localises to the cytoplasm. The enzyme catalyses AMP + ATP = 2 ADP. It functions in the pathway purine metabolism; AMP biosynthesis via salvage pathway; AMP from ADP: step 1/1. Its function is as follows. Catalyzes the reversible transfer of the terminal phosphate group between ATP and AMP. Plays an important role in cellular energy homeostasis and in adenine nucleotide metabolism. The polypeptide is Adenylate kinase (adk) (Streptomyces scabiei).